The primary structure comprises 532 residues: Optineurin (532 aa).

2 coiled-coil regions span residues 27–143 and 195–466; these read SMKN…LKLG and EEVA…EEMM. A CCHC NOA-type zinc finger spans residues 502 to 532; the sequence is QPSITVYTCPKCNLTVPDMDTLQIHVMDCIT. Zn(2+) contacts are provided by Cys-510, Cys-513, His-526, and Cys-530.

Its subcellular location is the cytoplasm. The protein localises to the perinuclear region. It is found in the golgi apparatus. The protein resides in the trans-Golgi network. It localises to the cytoplasmic vesicle. Its subcellular location is the recycling endosome. The protein localises to the autophagosome. Functionally, probably part of the TNF-alpha signaling pathway that can shift the equilibrium toward induction of cell death. May act by regulating membrane trafficking and cellular morphogenesis. In Xenopus laevis (African clawed frog), this protein is Optineurin (optn).